The chain runs to 272 residues: Formamidopyrimidine-DNA glycosylase (272 aa).

Catalysis depends on proline 2, which acts as the Schiff-base intermediate with DNA. Glutamate 3 functions as the Proton donor in the catalytic mechanism. The active-site Proton donor; for beta-elimination activity is lysine 58. Residues histidine 93, arginine 112, and arginine 153 each contribute to the DNA site. Residues 238 to 272 form an FPG-type zinc finger; it reads HVYGKSGQHCPKCGNILEDLKISNRGTVYCPHCQR. Residue arginine 262 is the Proton donor; for delta-elimination activity of the active site.

Belongs to the FPG family. In terms of assembly, monomer. Requires Zn(2+) as cofactor.

It catalyses the reaction Hydrolysis of DNA containing ring-opened 7-methylguanine residues, releasing 2,6-diamino-4-hydroxy-5-(N-methyl)formamidopyrimidine.. It carries out the reaction 2'-deoxyribonucleotide-(2'-deoxyribose 5'-phosphate)-2'-deoxyribonucleotide-DNA = a 3'-end 2'-deoxyribonucleotide-(2,3-dehydro-2,3-deoxyribose 5'-phosphate)-DNA + a 5'-end 5'-phospho-2'-deoxyribonucleoside-DNA + H(+). Involved in base excision repair of DNA damaged by oxidation or by mutagenic agents. Acts as a DNA glycosylase that recognizes and removes damaged bases. Has a preference for oxidized purines, such as 7,8-dihydro-8-oxoguanine (8-oxoG). Has AP (apurinic/apyrimidinic) lyase activity and introduces nicks in the DNA strand. Cleaves the DNA backbone by beta-delta elimination to generate a single-strand break at the site of the removed base with both 3'- and 5'-phosphates. The sequence is that of Formamidopyrimidine-DNA glycosylase from Dichelobacter nodosus (strain VCS1703A).